We begin with the raw amino-acid sequence, 466 residues long: DNA polymerase delta subunit 3 (466 aa).

Residue alanine 2 is modified to N-acetylalanine. Disordered regions lie at residues 145 to 218 and 255 to 466; these read PAES…KEVM and EQEV…FQRK. Composition is skewed to basic and acidic residues over residues 205-218, 255-265, and 281-297; these read DANKETKTEAKEVM, EQEVKEEKKVE, and DLKKSSKKAEPVRMQQK. Lysine 259 participates in a covalent cross-link: Glycyl lysine isopeptide (Lys-Gly) (interchain with G-Cter in SUMO); alternate. Lysine 259 participates in a covalent cross-link: Glycyl lysine isopeptide (Lys-Gly) (interchain with G-Cter in SUMO2); alternate. Lysine 262 is covalently cross-linked (Glycyl lysine isopeptide (Lys-Gly) (interchain with G-Cter in SUMO2)). Serine 308 bears the Phosphoserine mark. Residues 350 to 360 are compositionally biased toward pro residues; that stretch reads PSPPPPSPSPE. Phosphoserine is present on residues serine 407 and serine 409. Position 411 is a phosphothreonine (threonine 411). The residue at position 413 (serine 413) is a Phosphoserine. Positions 432–441 are enriched in basic and acidic residues; it reads VKKEPKEERK. Lysine 433 is covalently cross-linked (Glycyl lysine isopeptide (Lys-Gly) (interchain with G-Cter in SUMO); alternate). A Glycyl lysine isopeptide (Lys-Gly) (interchain with G-Cter in SUMO2); alternate cross-link involves residue lysine 433. Positions 456–463 match the PIP-box motif; the sequence is QVAITGFF.

Component of both the DNA polymerase delta and DNA polymerase zeta complexes. The tetrameric DNA polymerase delta complex (Pol-delta4), which consists of POLD1/p125, POLD2/p50, POLD3/p66/p68 and POLD4/p12, with POLD1 bearing DNA polymerase and 3' to 5' proofreading exonuclease activities. Within this complex, directly interacts with POLD2. Following stress caused by DNA damaging agents or by replication stress, POLD4 is degraded and Pol-delta4 is converted into a trimeric form of the complex (Pol-delta3), which consists of POLD1, POLD2 and POLD3. Pol-delta3 is the major form occurring at S phase replication sites, as well as DNA damage sites. Directly interacts with PCNA, as do POLD1 and POLD4; this interaction stimulates Pol-delta polymerase activity. Component of the DNA polymerase zeta complex (POLZ), which consists of REV3L, MAD2L2, POLD2 and POLD3, with REV3L bearing DNA polymerase catalytic activity. The DNA polymerase delta complex interacts with POLDIP2; this interaction is probably mediated through direct binding to POLD2. In terms of processing, ubiquitinated, but not targeted to the proteasome. Sumoylated. Sumoylation by SUMO3 may be predominant.

The protein localises to the cytoplasm. It is found in the nucleus. In terms of biological role, accessory component of both the DNA polymerase delta complex and the DNA polymerase zeta complex. As a component of the trimeric and tetrameric DNA polymerase delta complexes (Pol-delta3 and Pol-delta4, respectively), plays a role in high fidelity genome replication, including in lagging strand synthesis, and repair. Required for optimal Pol-delta activity. Stabilizes the Pol-delta complex and plays a major role in Pol-delta stimulation by PCNA. Pol-delta3 and Pol-delta4 are characterized by the absence or the presence of POLD4. They exhibit differences in catalytic activity. Most notably, Pol-delta3 shows higher proofreading activity than Pol-delta4. Although both Pol-delta3 and Pol-delta4 process Okazaki fragments in vitro, Pol-delta3 may also be better suited to fulfill this task, exhibiting near-absence of strand displacement activity compared to Pol-delta4 and stalling on encounter with the 5'-blocking oligonucleotides. Pol-delta3 idling process may avoid the formation of a gap, while maintaining a nick that can be readily ligated. Along with DNA polymerase kappa, DNA polymerase delta carries out approximately half of nucleotide excision repair (NER) synthesis following UV irradiation. In this context, POLD3, along with PCNA and RFC1-replication factor C complex, is required to recruit POLD1, the catalytic subunit of the polymerase delta complex, to DNA damage sites. Under conditions of DNA replication stress, required for the repair of broken replication forks through break-induced replication (BIR). Involved in the translesion synthesis (TLS) of templates carrying O6-methylguanine or abasic sites performed by Pol-delta4, independently of DNA polymerase zeta (REV3L) or eta (POLH). Facilitates abasic site bypass by DNA polymerase delta by promoting extension from the nucleotide inserted opposite the lesion. Also involved in TLS, as a component of the tetrameric DNA polymerase zeta complex. Along with POLD2, dramatically increases the efficiency and processivity of DNA synthesis of the DNA polymerase zeta complex compared to the minimal zeta complex, consisting of only REV3L and REV7. This is DNA polymerase delta subunit 3 (POLD3) from Bos taurus (Bovine).